The chain runs to 311 residues: Nuclear hormone receptor family member nhr-111 (311 aa).

The segment at residues 39–115 (ITLCAVCGDT…KGMNKNAVQP (77 aa)) is a DNA-binding region (nuclear receptor). 2 consecutive NR C4-type zinc fingers follow at residues 42-62 (CAVC…CFGC) and 78-98 (CWNG…CKSC). The 196-residue stretch at 116-311 (ERTSHSYTVE…KACEIVISFL (196 aa)) folds into the NR LBD domain.

Belongs to the nuclear hormone receptor family.

The protein localises to the nucleus. Its function is as follows. Orphan nuclear receptor. The sequence is that of Nuclear hormone receptor family member nhr-111 (nhr-111) from Caenorhabditis elegans.